A 508-amino-acid chain; its full sequence is MGLPWYRVHTVVLNDPGRLLAVHIMHTALVSGWAGSMALYELAVFDPSDPVLDPMWRQGMFVIPFMTRLGITNSWGGWSITGGTITNPGIWSYEGVAGAHIVFSGLCFLAAIWHWVYWDLQIFCDERTGKPSLDLPKIFGIHLFLSGLACFGFGAFHVTGLYGPGIWVSDPYGLTGKVQSVNPAWGVEGFDPFVPGGIASHHIAAGTLGILAGLFHLSVRPPQRLYKGLRMGNIETVLSSSIAAVFFAAFVVAGTMWYGSATTPIELFGPTRYQWDQGYFQQEIYRRVGAGLAENKSLSDVWSKIPEKLAFYDYIGNNPAKGGLFRAGSMDNGDGIAVGWLGHPIFRDKEGRELFVRRMPTFFETFPVVLVDGDGIVRADVPFRRAESKYSVEQVGVTVEFYGGELDGVSYSDPATVKKYARRAQLGEIFELDRATLKSDGVFRSSPRGWFTFGHASFALLFFFGHIWHGARTLFRDVFAGIDPDLDAQVEFGAFQKLGDPTTKRQVV.

Helical transmembrane passes span 21–36 (AVHI…WAGS), 101–115 (IVFS…IWHW), 140–156 (GIHL…FGAF), 203–218 (IAAG…FHLS), 237–252 (VLSS…AFVV), and 457–472 (SFAL…HGAR).

Belongs to the PsbB/PsbC family. PsbB subfamily. As to quaternary structure, PSII is composed of 1 copy each of membrane proteins PsbA, PsbB, PsbC, PsbD, PsbE, PsbF, PsbH, PsbI, PsbJ, PsbK, PsbL, PsbM, PsbT, PsbX, PsbY, PsbZ, Psb30/Ycf12, at least 3 peripheral proteins of the oxygen-evolving complex and a large number of cofactors. It forms dimeric complexes. Binds multiple chlorophylls. PSII binds additional chlorophylls, carotenoids and specific lipids. is required as a cofactor.

It is found in the plastid. The protein resides in the chloroplast thylakoid membrane. In terms of biological role, one of the components of the core complex of photosystem II (PSII). It binds chlorophyll and helps catalyze the primary light-induced photochemical processes of PSII. PSII is a light-driven water:plastoquinone oxidoreductase, using light energy to abstract electrons from H(2)O, generating O(2) and a proton gradient subsequently used for ATP formation. This is Photosystem II CP47 reaction center protein from Ranunculus macranthus (Large buttercup).